Here is a 53-residue protein sequence, read N- to C-terminus: Conotoxin Cal6.23 (53 aa).

The signal sequence occupies residues 1 to 22 (MKLTAVLMVAVLVLTACQLITA). 3 disulfide bridges follow: cysteine 25/cysteine 40, cysteine 32/cysteine 47, and cysteine 39/cysteine 51.

It belongs to the conotoxin O1 superfamily. Expressed by the venom duct.

The protein localises to the secreted. In terms of biological role, probable neurotoxin. The chain is Conotoxin Cal6.23 from Californiconus californicus (California cone).